The primary structure comprises 110 residues: Vacuolar ATPase assembly integral membrane protein VMA21 (110 aa).

The segment at 1 to 28 is disordered; the sequence is MTTRRIIGQDGEEKTYLDVDPRGPPGPS. Over 1-44 the chain is Cytoplasmic; the sequence is MTTRRIIGQDGEEKTYLDVDPRGPPGPSNISPAVPASVIWKLMS. The segment covering 11 to 21 has biased composition (basic and acidic residues); the sequence is GEEKTYLDVDP. A helical transmembrane segment spans residues 45–65; it reads FTFAMITLPIGTYFFTVNYVF. Residues 66–71 are Lumenal-facing; that stretch reads GGNATY. Residues 72–92 traverse the membrane as a helical segment; the sequence is AGALAAIMANVVLIAYVIMAF. The Cytoplasmic segment spans residues 93–110; sequence KDDQAEQAEDAREAKKEL. The Prevents secretion from ER signature appears at 107-110; that stretch reads KKEL.

The protein belongs to the VMA21 family.

Its subcellular location is the endoplasmic reticulum membrane. The protein localises to the endoplasmic reticulum-Golgi intermediate compartment membrane. The protein resides in the cytoplasmic vesicle. It is found in the COPII-coated vesicle membrane. Required for the assembly of the V0 complex of the vacuolar ATPase (V-ATPase) in the endoplasmic reticulum. This chain is Vacuolar ATPase assembly integral membrane protein VMA21, found in Phaeosphaeria nodorum (strain SN15 / ATCC MYA-4574 / FGSC 10173) (Glume blotch fungus).